The primary structure comprises 111 residues: Wound-induced proteinase inhibitor 1 (111 aa).

The N-terminal stretch at 1–23 (MEAKFAHIILFFLLAFSFETLMA) is a signal peptide. A propeptide spanning residues 24 to 36 (RKESDGPEVIKLL) is cleaved from the precursor.

This sequence belongs to the protease inhibitor I13 (potato type I serine protease inhibitor) family.

Its subcellular location is the secreted. The protein is Wound-induced proteinase inhibitor 1 of Solanum peruvianum (Peruvian tomato).